A 168-amino-acid polypeptide reads, in one-letter code: Large ribosomal subunit protein uL10 (168 aa).

The protein belongs to the universal ribosomal protein uL10 family. As to quaternary structure, part of the ribosomal stalk of the 50S ribosomal subunit. The N-terminus interacts with L11 and the large rRNA to form the base of the stalk. The C-terminus forms an elongated spine to which L12 dimers bind in a sequential fashion forming a multimeric L10(L12)X complex.

In terms of biological role, forms part of the ribosomal stalk, playing a central role in the interaction of the ribosome with GTP-bound translation factors. The protein is Large ribosomal subunit protein uL10 of Levilactobacillus brevis (strain ATCC 367 / BCRC 12310 / CIP 105137 / JCM 1170 / LMG 11437 / NCIMB 947 / NCTC 947) (Lactobacillus brevis).